Consider the following 766-residue polypeptide: TRP-like ion channel protein flc1 (766 aa).

The first 24 residues, M1–A24, serve as a signal peptide directing secretion. Topologically, residues D25 to G170 are lumenal. N56, N73, N89, and N109 each carry an N-linked (GlcNAc...) asparagine glycan. A helical transmembrane segment spans residues V171–A191. Residues S192–D205 are Cytoplasmic-facing. A helical transmembrane segment spans residues I206 to V226. Over Y227–T351 the chain is Lumenal. N325 carries N-linked (GlcNAc...) asparagine glycosylation. A helical transmembrane segment spans residues I352–G372. Residues M373–R407 are Cytoplasmic-facing. The helical transmembrane segment at L408–D428 threads the bilayer. Over S429–S432 the chain is Lumenal. The chain crosses the membrane as a helical span at residues I433 to L453. Residues S454–H493 are Cytoplasmic-facing. The chain crosses the membrane as a helical span at residues Y494–G514. Topologically, residues P515–S517 are lumenal. The helical transmembrane segment at A518–A538 threads the bilayer. Over C539–D548 the chain is Cytoplasmic. Residues W549 to I569 traverse the membrane as a helical segment. Over P570 to A580 the chain is Lumenal. The chain crosses the membrane as a helical span at residues V581 to F601. Residues L602–Y766 are Cytoplasmic-facing. The disordered stretch occupies residues A704–Y766. Residues T757–Y766 show a composition bias toward basic and acidic residues.

This sequence belongs to the transient receptor potential (TRP) ion channel family.

The protein resides in the endoplasmic reticulum membrane. Its function is as follows. Endoplasmic reticulum membrane flavin carrier protein that plays a crucial role in Ca(2+) signaling/homeostasis via the modulation of the calcineurin-Crz1 stress response pathway which is important for both stress responses and virulence. This is TRP-like ion channel protein flc1 from Cryptococcus neoformans var. grubii serotype A (strain H99 / ATCC 208821 / CBS 10515 / FGSC 9487) (Filobasidiella neoformans var. grubii).